The primary structure comprises 209 residues: Pyrrolidone-carboxylate peptidase (209 aa).

Residues E79, C142, and H164 contribute to the active site.

The protein belongs to the peptidase C15 family. In terms of assembly, homotetramer.

The protein localises to the cytoplasm. The catalysed reaction is Release of an N-terminal pyroglutamyl group from a polypeptide, the second amino acid generally not being Pro.. Functionally, removes 5-oxoproline from various penultimate amino acid residues except L-proline. The polypeptide is Pyrrolidone-carboxylate peptidase (Saccharolobus islandicus (strain Y.N.15.51 / Yellowstone #2) (Sulfolobus islandicus)).